Consider the following 294-residue polypeptide: Lysozyme M1 (294 aa).

Residues 81 to 294 form the Ch-type lysozyme domain; that stretch reads GVQGIDVSHW…RLLALANNTA (214 aa). Active-site residues include Asp86, Asp175, and Glu177. Cys185 and Cys224 are oxidised to a cystine.

This sequence belongs to the glycosyl hydrolase 25 family.

It localises to the secreted. It catalyses the reaction Hydrolysis of (1-&gt;4)-beta-linkages between N-acetylmuramic acid and N-acetyl-D-glucosamine residues in a peptidoglycan and between N-acetyl-D-glucosamine residues in chitodextrins.. Its function is as follows. This enzyme has both lysozyme (acetylmuramidase) and diacetylmuramidase activities. The protein is Lysozyme M1 (acm) of Streptomyces globisporus.